Reading from the N-terminus, the 473-residue chain is Digalactosyldiacylglycerol synthase 2, chloroplastic (473 aa).

Interaction with the membrane lipid bilayer regions lie at residues 130–148 (LTWF…YVIG) and 227–245 (QPFT…SKGY).

It belongs to the glycosyltransferase group 1 family. Glycosyltransferase 4 subfamily. As to expression, expressed in leaves, flowers and roots, but not in stems and siliques.

Its subcellular location is the plastid. The protein localises to the chloroplast outer membrane. It catalyses the reaction a 1,2-diacyl-3-O-(beta-D-galactosyl)-sn-glycerol + UDP-alpha-D-galactose = a 1,2-diacyl-3-O-[alpha-D-galactosyl-(1-&gt;6)-beta-D-galactosyl]-sn-glycerol + UDP + H(+). Its activity is regulated as follows. Stimulated by anionic phospholipids. Functionally, involved in the synthesis of diacylglycerol galactolipids that are specifically found in thylakoid membranes. Specific for alpha-glycosidic linkages. During phosphate shortage, involved in the biosynthesis of digalactosyldiacylglycerol (DGDG) which rescues the limitation of phospholipids. The polypeptide is Digalactosyldiacylglycerol synthase 2, chloroplastic (Arabidopsis thaliana (Mouse-ear cress)).